Reading from the N-terminus, the 397-residue chain is Sporulation-specific protein 20 (397 aa).

Residues 1-26 (MGFRKILASKSHHSRHHNQHHKNLKL) form a disordered region. Positions 4-50 (RKILASKSHHSRHHNQHHKNLKLQNHRYVLISNITGSHETKYLSPFR) are inhibitory region. The span at 10 to 26 (KSHHSRHHNQHHKNLKL) shows a compositional bias: basic residues. Positions 51-95 (MDNCSGSRRRDRLHVKLKSLRNKIHKQLHPNCRFDDATKTSDDKC) are positive regulatory region. Residues 330-392 (NQMEIDLYGN…QAKRYRLEKV (63 aa)) form the t-SNARE coiled-coil homology domain.

Belongs to the SNAP-25 family. Interacts with the t-SNARE SSO1 and the v-SNARE SNC2.

The protein localises to the cell membrane. Its subcellular location is the prospore membrane. Required to maintain the prospore membrane to the nucleus during sporulation in order to capture the daughter nuclei and form the spores. Mediates the fusion of exocytic vesicles with the plasma membrane during sporulation through its interactions with the t-SNARE SSO1 and v-SNARE SNC2. The polypeptide is Sporulation-specific protein 20 (SPO20) (Saccharomyces cerevisiae (strain ATCC 204508 / S288c) (Baker's yeast)).